Reading from the N-terminus, the 525-residue chain is GMP synthase [glutamine-hydrolyzing] (525 aa).

The Glutamine amidotransferase type-1 domain maps to 9–207 (RILILDFGSQ…VLDICACEAL (199 aa)). Residue C86 is the Nucleophile of the active site. Active-site residues include H181 and E183. Residues 208 to 400 (WTPATIIEDA…LGLPYDMLYR (193 aa)) form the GMPS ATP-PPase domain. Residue 235–241 (SGGVDSS) coordinates ATP.

In terms of assembly, homodimer.

It carries out the reaction XMP + L-glutamine + ATP + H2O = GMP + L-glutamate + AMP + diphosphate + 2 H(+). The protein operates within purine metabolism; GMP biosynthesis; GMP from XMP (L-Gln route): step 1/1. Functionally, catalyzes the synthesis of GMP from XMP. The polypeptide is GMP synthase [glutamine-hydrolyzing] (Yersinia enterocolitica serotype O:8 / biotype 1B (strain NCTC 13174 / 8081)).